The chain runs to 241 residues: Probable transcriptional regulatory protein Rpic_2388 (241 aa).

The protein belongs to the TACO1 family.

It localises to the cytoplasm. This chain is Probable transcriptional regulatory protein Rpic_2388, found in Ralstonia pickettii (strain 12J).